We begin with the raw amino-acid sequence, 471 residues long: 5-hydroxytryptamine receptor 2B (471 aa).

Residues 1-26 are Extracellular-facing; the sequence is MFQAAVGPLQTNISLPEETPGLELNW. N-linked (GlcNAc...) asparagine glycosylation occurs at asparagine 12. Residues 27-49 form a helical membrane-spanning segment; it reads AALLIVMVIIPTIGGNILVILAV. Topologically, residues 50–60 are cytoplasmic; that stretch reads WLEKKLQNATN. The chain crosses the membrane as a helical span at residues 61–83; the sequence is FFLMSLAVADLLVGLLVMPIALI. Residues 84–99 are Extracellular-facing; it reads TILYDSDWPLPEPLCP. A disulfide bond links cysteine 98 and cysteine 182. Residues 100–121 form a helical membrane-spanning segment; it reads IWLFLDVLFSTASIMHLCAISL. Ergotamine-binding residues include aspartate 105 and threonine 110. The short motif at 122–124 is the DRY motif; important for ligand-induced conformation changes element; sequence DRY. Residues 122–141 lie on the Cytoplasmic side of the membrane; it reads DRYIAIKKPIQHSQYKSRAK. Residues 142–162 traverse the membrane as a helical segment; the sequence is VMLKIALVWLISICIAIPIPI. The Extracellular segment spans residues 163–191; sequence KGLRNYPHPNNITFTSNHTCVLKTDTFQE. 2 N-linked (GlcNAc...) asparagine glycosylation sites follow: asparagine 173 and asparagine 179. An ergotamine-binding site is contributed by leucine 184. The [DE]RFG motif; may stabilize a conformation that preferentially activates signaling via beta-arrestin family members motif lies at 187 to 190; that stretch reads DTFQ. Residues 192 to 214 traverse the membrane as a helical segment; that stretch reads FIIFGSLVAFFIPLTIMMIIYFL. At 215 to 308 the chain is on the cytoplasmic side; sequence TVRVLRKKVY…TLTNEQRASK (94 aa). The helical transmembrane segment at 309 to 329 threads the bilayer; it reads VLGIVFLLFVVMWCPFFITNI. At 330–344 the chain is on the extracellular side; that stretch reads TSALCGPCDANIIGR. A disulfide bond links cysteine 334 and cysteine 337. The helical transmembrane segment at 345-366 threads the bilayer; that stretch reads LMEIFSWVGYVSSGINPLVYTL. An NPxxY motif; important for ligand-induced conformation changes and signaling motif is present at residues 360–364; it reads NPLVY. Topologically, residues 367–471 are cytoplasmic; that stretch reads FNKTFRQAFT…CKQEERVSCV (105 aa). A lipid anchor (S-palmitoyl cysteine) is attached at cysteine 381. Positions 469–471 match the PDZ-binding motif; the sequence is SCV.

Belongs to the G-protein coupled receptor 1 family. As to expression, detected in brain, heart and gut.

The protein localises to the cell membrane. It is found in the synapse. The protein resides in the synaptosome. In terms of biological role, G-protein coupled receptor for 5-hydroxytryptamine (serotonin). Also functions as a receptor for various ergot alkaloid derivatives and psychoactive substances. Ligand binding causes a conformation change that triggers signaling via guanine nucleotide-binding proteins (G proteins) and modulates the activity of downstream effectors. HTR2B is coupled to G(q)/G(11) G alpha proteins and activates phospholipase C-beta, releasing diacylglycerol (DAG) and inositol 1,4,5-trisphosphate (IP3) second messengers that modulate the activity of phosphatidylinositol 3-kinase and promote the release of Ca(2+) ions from intracellular stores, respectively. Beta-arrestin family members inhibit signaling via G proteins and mediate activation of alternative signaling pathways. Plays a role in the regulation of dopamine and 5-hydroxytryptamine release, 5-hydroxytryptamine uptake and in the regulation of extracellular dopamine and 5-hydroxytryptamine levels, and thereby affects neural activity. The chain is 5-hydroxytryptamine receptor 2B (htr2b) from Dichotomyctere fluviatilis (Green pufferfish).